The following is a 155-amino-acid chain: Ribosomal RNA large subunit methyltransferase H (155 aa).

S-adenosyl-L-methionine is bound by residues Leu-72, Gly-103, and 122–127 (LSALTL).

This sequence belongs to the RNA methyltransferase RlmH family. As to quaternary structure, homodimer.

It is found in the cytoplasm. The catalysed reaction is pseudouridine(1915) in 23S rRNA + S-adenosyl-L-methionine = N(3)-methylpseudouridine(1915) in 23S rRNA + S-adenosyl-L-homocysteine + H(+). In terms of biological role, specifically methylates the pseudouridine at position 1915 (m3Psi1915) in 23S rRNA. The sequence is that of Ribosomal RNA large subunit methyltransferase H from Enterobacter sp. (strain 638).